A 225-amino-acid chain; its full sequence is Probable methylthioribulose-1-phosphate dehydratase (225 aa).

Cys86 is a substrate binding site. Residues His104 and His106 each coordinate Zn(2+). Glu127 (proton donor/acceptor) is an active-site residue. His183 provides a ligand contact to Zn(2+).

This sequence belongs to the aldolase class II family. MtnB subfamily. The cofactor is Zn(2+).

It is found in the cytoplasm. It catalyses the reaction 5-(methylsulfanyl)-D-ribulose 1-phosphate = 5-methylsulfanyl-2,3-dioxopentyl phosphate + H2O. It participates in amino-acid biosynthesis; L-methionine biosynthesis via salvage pathway; L-methionine from S-methyl-5-thio-alpha-D-ribose 1-phosphate: step 2/6. Catalyzes the dehydration of methylthioribulose-1-phosphate (MTRu-1-P) into 2,3-diketo-5-methylthiopentyl-1-phosphate (DK-MTP-1-P). The polypeptide is Probable methylthioribulose-1-phosphate dehydratase (Leishmania infantum).